Reading from the N-terminus, the 219-residue chain is Chalcone--flavanone isomerase (219 aa).

The substrate site is built by threonine 50, asparagine 115, and serine 188.

Belongs to the chalcone isomerase family.

It catalyses the reaction a chalcone = a flavanone.. It functions in the pathway secondary metabolite biosynthesis; flavonoid biosynthesis. Its function is as follows. Catalyzes the intramolecular cyclization of bicyclic chalcones into tricyclic (S)-flavanones. Responsible for the isomerization of 4,2',4',6'-tetrahydroxychalcone (also termed chalcone) into naringenin. This chain is Chalcone--flavanone isomerase (CHI), found in Clitoria ternatea (Butterfly pea).